We begin with the raw amino-acid sequence, 537 residues long: CTP synthase (537 aa).

Residues 1–269 are amidoligase domain; sequence MNQTKYIFVT…DVVALKKLDL (269 aa). Ser15 contributes to the CTP binding site. Ser15 is a binding site for UTP. ATP is bound at residue 16–21; that stretch reads SLGKGI. Residue Tyr56 coordinates L-glutamine. Asp73 is an ATP binding site. Mg(2+)-binding residues include Asp73 and Glu143. Residues 150–152, 190–195, and Lys226 each bind CTP; these read DIE and KTKPTQ. UTP-binding positions include 190-195 and Lys226; that span reads KTKPTQ. In terms of domain architecture, Glutamine amidotransferase type-1 spans 295–537; sequence NIGLVGKYVE…VAAAVNAHKK (243 aa). L-glutamine is bound at residue Gly357. Cys384 (nucleophile; for glutamine hydrolysis) is an active-site residue. Residues 385–388, Glu408, and Arg465 contribute to the L-glutamine site; that span reads LGMQ. Catalysis depends on residues His510 and Glu512.

Belongs to the CTP synthase family. In terms of assembly, homotetramer.

It carries out the reaction UTP + L-glutamine + ATP + H2O = CTP + L-glutamate + ADP + phosphate + 2 H(+). It catalyses the reaction L-glutamine + H2O = L-glutamate + NH4(+). The enzyme catalyses UTP + NH4(+) + ATP = CTP + ADP + phosphate + 2 H(+). It participates in pyrimidine metabolism; CTP biosynthesis via de novo pathway; CTP from UDP: step 2/2. With respect to regulation, allosterically activated by GTP, when glutamine is the substrate; GTP has no effect on the reaction when ammonia is the substrate. The allosteric effector GTP functions by stabilizing the protein conformation that binds the tetrahedral intermediate(s) formed during glutamine hydrolysis. Inhibited by the product CTP, via allosteric rather than competitive inhibition. Its function is as follows. Catalyzes the ATP-dependent amination of UTP to CTP with either L-glutamine or ammonia as the source of nitrogen. Regulates intracellular CTP levels through interactions with the four ribonucleotide triphosphates. The chain is CTP synthase from Flavobacterium johnsoniae (strain ATCC 17061 / DSM 2064 / JCM 8514 / BCRC 14874 / CCUG 350202 / NBRC 14942 / NCIMB 11054 / UW101) (Cytophaga johnsonae).